Here is a 208-residue protein sequence, read N- to C-terminus: Proteasome subunit beta 2 (208 aa).

A propeptide spans 1–14 (MGNELQLENKILKG) (removed in mature form; by autocatalysis). The active-site Nucleophile is the T15.

This sequence belongs to the peptidase T1B family. In terms of assembly, the 20S proteasome core is composed of 14 alpha and 14 beta subunits that assemble into four stacked heptameric rings, resulting in a barrel-shaped structure. The two inner rings, each composed of seven catalytic beta subunits, are sandwiched by two outer rings, each composed of seven alpha subunits. The catalytic chamber with the active sites is on the inside of the barrel. Has a gated structure, the ends of the cylinder being occluded by the N-termini of the alpha-subunits. Is capped at one or both ends by the proteasome regulatory ATPase, PAN.

Its subcellular location is the cytoplasm. The enzyme catalyses Cleavage of peptide bonds with very broad specificity.. The formation of the proteasomal ATPase PAN-20S proteasome complex, via the docking of the C-termini of PAN into the intersubunit pockets in the alpha-rings, triggers opening of the gate for substrate entry. Interconversion between the open-gate and close-gate conformations leads to a dynamic regulation of the 20S proteasome proteolysis activity. Component of the proteasome core, a large protease complex with broad specificity involved in protein degradation. The sequence is that of Proteasome subunit beta 2 from Saccharolobus solfataricus (strain ATCC 35092 / DSM 1617 / JCM 11322 / P2) (Sulfolobus solfataricus).